Consider the following 118-residue polypeptide: Large ribosomal subunit protein bL21c (118 aa).

It belongs to the bacterial ribosomal protein bL21 family. Part of the 50S ribosomal subunit.

The protein resides in the plastid. Its subcellular location is the chloroplast. Functionally, this protein binds to 23S rRNA. This chain is Large ribosomal subunit protein bL21c, found in Anthoceros angustus (Hornwort).